The sequence spans 297 residues: Nucleotide-binding protein BMA10229_A1510 (297 aa).

Position 8-15 (glycine 8–serine 15) interacts with ATP. Aspartate 57 to serine 60 lines the GTP pocket.

Belongs to the RapZ-like family.

In terms of biological role, displays ATPase and GTPase activities. The chain is Nucleotide-binding protein BMA10229_A1510 from Burkholderia mallei (strain NCTC 10229).